The sequence spans 886 residues: Cadherin-1 (886 aa).

The first 23 residues, 1-23 (MGARCRSFSALLLLLQVSSWLCQ), serve as a signal peptide directing secretion. Positions 24-158 (QPESESDSCR…FHQGLRRQKR (135 aa)) are excised as a propeptide. Over 24 to 713 (QPESESDSCR…SLEAGLQVPA (690 aa)) the chain is Extracellular. 5 consecutive Cadherin domains span residues 159 to 266 (DWVI…RPEF), 267 to 379 (IQEV…APIF), 380 to 490 (NPST…APIF), 491 to 597 (VPAE…DNAP), and 598 to 701 (IPEP…NCMK). D261 is a Ca(2+) binding site. O-linked (Man...) serine glycans are attached at residues S284 and S289. Ca(2+) is bound at residue D292. O-linked (Man...) threonine glycosylation is found at T362, T474, T476, and T513. N562 carries an N-linked (GlcNAc...) asparagine glycan. Residues T580, T582, and T584 are each glycosylated (O-linked (Man...) threonine). N641 carries an N-linked (GlcNAc...) asparagine glycan. A helical transmembrane segment spans residues 714 to 734 (ILGILGGILALLILILLLLLF). Residues 735-886 (LRRRTVVKEP…ADMYGGGEED (152 aa)) lie on the Cytoplasmic side of the membrane. A disordered region spans residues 751–771 (DTRDNVYYYDEEGGGEEDQDF). A phosphotyrosine; by SRC mark is found at Y757, Y758, and Y759. A compositionally biased stretch (acidic residues) spans 759-771 (YDEEGGGEEDQDF). The interval 762–773 (EGGGEEDQDFDL) is required for binding CTNND1 and PSEN1. 5 positions are modified to phosphoserine: S774, S797, S842, S844, and S850. The interval 815-886 (IDENLKAADS…ADMYGGGEED (72 aa)) is required for binding alpha, beta and.

Homodimer; disulfide-linked. Component of an E-cadherin/ catenin adhesion complex composed of at least E-cadherin/CDH1, beta-catenin/CTNNB1 or gamma-catenin/JUP, and potentially alpha-catenin/CTNNA1; the complex is located to adherens junctions. Found in a complex composed of CDH1, RAP1A and PKP3; PKP3 acts as a scaffold protein within the complex, the complex is required for CDH1 localization to mature desmosome cell junctions. Interacts with the TRPV4 and CTNNB1 complex. Interacts with CTNND1. The stable association of CTNNA1 is controversial as CTNNA1 was shown not to bind to F-actin when assembled in the complex. Alternatively, the CTNNA1-containing complex may be linked to F-actin by other proteins such as LIMA1. Interaction with PSEN1, cleaves CDH1 resulting in the disassociation of cadherin-based adherens junctions (CAJs). Interacts with AJAP1 and DLGAP5. Interacts with TBC1D2. Interacts with LIMA1. Interacts with CAV1. Interacts with PIP5K1C. Interacts with DDR1; this stabilizes CDH1 at the cell surface and inhibits its internalization. Interacts with RAPGEF2. Interacts with RAB8B. Interacts with KLRG1. Forms a ternary complex composed of ADAM10, CADH1 and EPHA4; within the complex, CADH1 is cleaved by ADAM10 which disrupts adherens junctions. Interacts with SPEF1. Interacts with CTNNB1 and PKP2. Interacts with AMOTL2; the interaction may facilitate binding of radial actin fibers to cell junction complexes. Interacts with DSG3; the interaction is required for CDH1 localization to developing adherens junctions. During apoptosis or with calcium influx, cleaved by a membrane-bound metalloproteinase (ADAM10), PS1/gamma-secretase and caspase-3. Processing by the metalloproteinase, induced by calcium influx, causes disruption of cell-cell adhesion and the subsequent release of beta-catenin into the cytoplasm. The residual membrane-tethered cleavage product is rapidly degraded via an intracellular proteolytic pathway. Cleavage by caspase-3 releases the cytoplasmic tail resulting in disintegration of the actin microfilament system. The gamma-secretase-mediated cleavage promotes disassembly of adherens junctions. During development of the cochlear organ of Corti, cleavage by ADAM10 at adherens junctions promotes pillar cell separation. In terms of processing, N-glycosylation at Asn-641 is essential for expression, folding and trafficking. Addition of bisecting N-acetylglucosamine by MGAT3 modulates its cell membrane location. Post-translationally, ubiquitinated by a SCF complex containing SKP2, which requires prior phosphorylation by CK1/CSNK1A1. Ubiquitinated by CBLL1/HAKAI, requires prior phosphorylation at Tyr-758. O-glycosylated. O-manosylated by TMTC1, TMTC2, TMTC3 or TMTC4. Ser-289 and Thr-513 are O-manosylated by TMTC2 or TMTC4 but not TMTC1 or TMTC3.

The protein resides in the cell junction. The protein localises to the adherens junction. It localises to the cell membrane. It is found in the endosome. Its subcellular location is the golgi apparatus. The protein resides in the trans-Golgi network. The protein localises to the cytoplasm. It localises to the desmosome. Its function is as follows. Cadherins are calcium-dependent cell adhesion proteins. They preferentially interact with themselves in a homophilic manner in connecting cells; cadherins may thus contribute to the sorting of heterogeneous cell types. CDH1 is involved in mechanisms regulating cell-cell adhesions, mobility and proliferation of epithelial cells. Promotes organization of radial actin fiber structure and cellular response to contractile forces, via its interaction with AMOTL2 which facilitates anchoring of radial actin fibers to CDH1 junction complexes at the cell membrane. Plays a role in the early stages of desmosome cell-cell junction formation via facilitating the recruitment of DSG2 and DSP to desmosome plaques. Has a potent invasive suppressor role. It is a ligand for integrin alpha-E/beta-7. Functionally, E-Cad/CTF2 promotes non-amyloidogenic degradation of Abeta precursors. Has a strong inhibitory effect on APP C99 and C83 production. This chain is Cadherin-1 (Cdh1), found in Rattus norvegicus (Rat).